Reading from the N-terminus, the 299-residue chain is ATP phosphoribosyltransferase (299 aa).

This sequence belongs to the ATP phosphoribosyltransferase family. Long subfamily. Equilibrium between an active dimeric form, an inactive hexameric form and higher aggregates. Interconversion between the various forms is largely reversible and is influenced by the natural substrates and inhibitors of the enzyme. It depends on Mg(2+) as a cofactor.

It localises to the cytoplasm. It carries out the reaction 1-(5-phospho-beta-D-ribosyl)-ATP + diphosphate = 5-phospho-alpha-D-ribose 1-diphosphate + ATP. Its pathway is amino-acid biosynthesis; L-histidine biosynthesis; L-histidine from 5-phospho-alpha-D-ribose 1-diphosphate: step 1/9. Feedback inhibited by histidine. Its function is as follows. Catalyzes the condensation of ATP and 5-phosphoribose 1-diphosphate to form N'-(5'-phosphoribosyl)-ATP (PR-ATP). Has a crucial role in the pathway because the rate of histidine biosynthesis seems to be controlled primarily by regulation of HisG enzymatic activity. The chain is ATP phosphoribosyltransferase from Erwinia tasmaniensis (strain DSM 17950 / CFBP 7177 / CIP 109463 / NCPPB 4357 / Et1/99).